Reading from the N-terminus, the 311-residue chain is Forkhead box protein R2 (311 aa).

2 disordered regions span residues 56-76 and 90-171; these read PPEMPQKRRPSPDGDGPPCEP and LGSQ…QSPE. A compositionally biased stretch (basic and acidic residues) spans 115–128; the sequence is QKDEGSNCSEDKVV. Low complexity predominate over residues 129–143; it reads ESLPSSSSEQSPLQK. Acidic residues predominate over residues 153 to 164; the sequence is ELTEEEAEEPDD. Positions 192–294 form a DNA-binding region, fork-head; sequence RPPLNCSHLI…RVLAFAQRER (103 aa).

As to expression, expressed in breast cancer cell lines and primary cancer.

Its subcellular location is the nucleus. This chain is Forkhead box protein R2 (FOXR2), found in Homo sapiens (Human).